Consider the following 943-residue polypeptide: Translation initiation factor IF-2 (943 aa).

Positions 46–359 are disordered; it reads IKGMLSKQSA…MPQRKERPLP (314 aa). Positions 57-76 are enriched in low complexity; the sequence is KAPSSQAAKTPAKAAKTSSA. 2 stretches are compositionally biased toward basic and acidic residues: residues 92-103 and 110-124; these read SNDHADVAEHSQ and AKQE…KTSD. Polar residues predominate over residues 130–141; it reads SKSTILRPRSTQ. The span at 142-190 shows a compositional bias: low complexity; it reads TAHTNTNHNRGGNTASANNTANGRNSNRSNNNNNNRSANNANRSGNNNR. Composition is skewed to basic and acidic residues over residues 191 to 205, 239 to 250, and 259 to 271; these read SNER…RFDN, ASERQQPKRQEA, and KRSE…RPRT. 2 stretches are compositionally biased toward low complexity: residues 289–299 and 315–330; these read PAAAAPKPASA and NFGR…GFNR. Residues 331–342 are compositionally biased toward basic residues; it reads NNRRNKKNKRRQ. Residues 346–358 show a composition bias toward basic and acidic residues; it reads PKKEMPQRKERPL. Positions 444-613 constitute a tr-type G domain; the sequence is PRPPVVTIMG…LLEADVLELK (170 aa). Positions 453-460 are G1; that stretch reads GHVDHGKT. GTP is bound at residue 453 to 460; sequence GHVDHGKT. Residues 478–482 form a G2 region; it reads GITQH. Positions 499–502 are G3; sequence DTPG. Residues 499-503 and 553-556 contribute to the GTP site; these read DTPGH and NKID. The segment at 553-556 is G4; sequence NKID. The interval 589-591 is G5; sequence SAK.

It belongs to the TRAFAC class translation factor GTPase superfamily. Classic translation factor GTPase family. IF-2 subfamily.

The protein localises to the cytoplasm. Functionally, one of the essential components for the initiation of protein synthesis. Protects formylmethionyl-tRNA from spontaneous hydrolysis and promotes its binding to the 30S ribosomal subunits. Also involved in the hydrolysis of GTP during the formation of the 70S ribosomal complex. This chain is Translation initiation factor IF-2, found in Lacticaseibacillus casei (strain BL23) (Lactobacillus casei).